Consider the following 326-residue polypeptide: Protein BCCIP homolog (326 aa).

Residues 37–81 (SHPEDCQCSDEDISFDEKQKIPNLPRKGKEEQVSDSSDEEDSQED) form a disordered region. Position 45 is a phosphoserine (serine 45). A compositionally biased stretch (acidic residues) spans 72–81 (SSDEEDSQED).

It belongs to the BCP1 family.

The polypeptide is Protein BCCIP homolog (Arabidopsis thaliana (Mouse-ear cress)).